The sequence spans 249 residues: Triosephosphate isomerase (249 aa).

Position 9–11 (Asn-9–Lys-11) interacts with substrate. The Electrophile role is filled by His-94. Residue Glu-166 is the Proton acceptor of the active site. Residues Gly-172 and Gly-232–Gly-233 contribute to the substrate site.

Belongs to the triosephosphate isomerase family. As to quaternary structure, homodimer.

It is found in the cytoplasm. It carries out the reaction D-glyceraldehyde 3-phosphate = dihydroxyacetone phosphate. Its pathway is carbohydrate biosynthesis; gluconeogenesis. It participates in carbohydrate degradation; glycolysis; D-glyceraldehyde 3-phosphate from glycerone phosphate: step 1/1. Functionally, involved in the gluconeogenesis. Catalyzes stereospecifically the conversion of dihydroxyacetone phosphate (DHAP) to D-glyceraldehyde-3-phosphate (G3P). This chain is Triosephosphate isomerase, found in Xylella fastidiosa (strain M12).